The sequence spans 500 residues: Pentatricopeptide repeat-containing protein At1g05750, chloroplastic (500 aa).

A chloroplast-targeting transit peptide spans 1 to 54 (MGLLPVVGITSPALITHKNHANPKIQRHNQSTSETTVSWTSRINLLTRNGRLAE). 10 PPR repeats span residues 35–69 (TTVS…GVEP), 70–106 (NHIT…GLDR), 108–138 (HVMV…MEDK), 139–173 (NSVT…DLIS), 174–204 (WTAM…GVKP), 205–239 (DYVA…DFKN), 240–270 (NVRV…MEKR), 271–305 (TVVS…GFKP), 306–336 (DAVT…MKCD), and 342–376 (RIEH…PNEV). The segment at 377-453 (VIGSLLAACS…QPGFSSIEID (77 aa)) is type E motif. Positions 454-484 (DCMHVFMAGDNAHVETTYIREVLELISSDLR) are type E(+) motif.

It belongs to the PPR family. PCMP-E subfamily.

Its subcellular location is the plastid. It localises to the chloroplast. In Arabidopsis thaliana (Mouse-ear cress), this protein is Pentatricopeptide repeat-containing protein At1g05750, chloroplastic (PDE247).